A 95-amino-acid polypeptide reads, in one-letter code: Alpha-conotoxin GeXXA (95 aa).

A signal peptide spans 1–21 (MPKQEKMMLVLLILPLPYCNA). The propeptide occupies 22–45 (AGVTTVQWGGHGDGLDRYLQRGVR). 4 disulfide bridges follow: Cys-64/Cys-73, Cys-69/Cys-81, Cys-74/Cys-91, and Cys-79/Cys-93.

It belongs to the conotoxin D superfamily. As to quaternary structure, homodimer. Pseudo-homodimer (identical sequence, different post-translational modifications). Expressed by the venom duct.

The protein resides in the secreted. Functionally, alpha-D-conopeptides act as non-competitive inhibitors of nicotinic acetylcholine receptors (nAChR). Through its two C-terminal domains, this homodimeric protein would bind to two nAChR allosteric sites, located outside the nAChR C-loop of the principal binding face and at the adjacent binding interface in a clockwise direction. This toxin has strong inhibitory activity on rat alpha-9-alpha-10 (CHRNA9-CHRNA10) (IC(50)=1.2 nM) and a moderate inhibitory activity on human alpha-7 (CHRNA7) (IC(50)=210 nM), rat alpha-3-beta-2 (CHRNA3-CHRNB2) (IC(50)=498 nM), rat alpha-3-beta-4 (CHRNA3-CHRNB4) (IC(50)=614 nM) and rat alpha-1-beta-1-delta-epsilon (CHRNA1-CHRNB1-CHRNE-CHRND) (IC(50)=743 nM) subtypes. Shows a weaker inhibitory activity on human alpha-9-alpha-10 (IC(50)=28 nM) than on the rat channel. This is explained by a different residue in the probable binding site (His-31 in rat alpha-10 and Leu-31 in human). The protein is Alpha-conotoxin GeXXA of Conus generalis (General cone).